The chain runs to 251 residues: Small ribosomal subunit protein uS2 (251 aa).

Belongs to the universal ribosomal protein uS2 family.

This is Small ribosomal subunit protein uS2 from Nitrosomonas europaea (strain ATCC 19718 / CIP 103999 / KCTC 2705 / NBRC 14298).